The sequence spans 218 residues: Phosphoribosylformylglycinamidine synthase subunit PurQ (218 aa).

The Glutamine amidotransferase type-1 domain occupies 2 to 218; that stretch reads RVGVIRFPGS…FFRGILKFRG (217 aa). Cys85 acts as the Nucleophile in catalysis. Catalysis depends on residues His192 and Glu194.

As to quaternary structure, part of the FGAM synthase complex composed of 1 PurL, 1 PurQ and 2 PurS subunits.

The protein resides in the cytoplasm. The catalysed reaction is N(2)-formyl-N(1)-(5-phospho-beta-D-ribosyl)glycinamide + L-glutamine + ATP + H2O = 2-formamido-N(1)-(5-O-phospho-beta-D-ribosyl)acetamidine + L-glutamate + ADP + phosphate + H(+). It carries out the reaction L-glutamine + H2O = L-glutamate + NH4(+). It functions in the pathway purine metabolism; IMP biosynthesis via de novo pathway; 5-amino-1-(5-phospho-D-ribosyl)imidazole from N(2)-formyl-N(1)-(5-phospho-D-ribosyl)glycinamide: step 1/2. Its function is as follows. Part of the phosphoribosylformylglycinamidine synthase complex involved in the purines biosynthetic pathway. Catalyzes the ATP-dependent conversion of formylglycinamide ribonucleotide (FGAR) and glutamine to yield formylglycinamidine ribonucleotide (FGAM) and glutamate. The FGAM synthase complex is composed of three subunits. PurQ produces an ammonia molecule by converting glutamine to glutamate. PurL transfers the ammonia molecule to FGAR to form FGAM in an ATP-dependent manner. PurS interacts with PurQ and PurL and is thought to assist in the transfer of the ammonia molecule from PurQ to PurL. The sequence is that of Phosphoribosylformylglycinamidine synthase subunit PurQ from Methanothermobacter thermautotrophicus (strain ATCC 29096 / DSM 1053 / JCM 10044 / NBRC 100330 / Delta H) (Methanobacterium thermoautotrophicum).